The sequence spans 245 residues: Flavin-dependent thymidylate synthase (245 aa).

A ThyX domain is found at 6 to 220; it reads PRVELLAHTP…PELFAHAGAK (215 aa). FAD-binding positions include Ser65, 89 to 91, and Gln97; that span reads RHR. DUMP is bound by residues 86-89, 97-101, and Arg159; these read QLVR and QQSQR. Positions 89–99 match the ThyX motif motif; that stretch reads RHRIASFSQQS. FAD-binding positions include 175–177 and His181; that span reads NCR. Arg186 is a dUMP binding site. Arg186 acts as the Involved in ionization of N3 of dUMP, leading to its activation in catalysis.

The protein belongs to the thymidylate synthase ThyX family. In terms of assembly, homotetramer. FAD is required as a cofactor.

The enzyme catalyses dUMP + (6R)-5,10-methylene-5,6,7,8-tetrahydrofolate + NADPH + H(+) = dTMP + (6S)-5,6,7,8-tetrahydrofolate + NADP(+). It functions in the pathway pyrimidine metabolism; dTTP biosynthesis. Catalyzes the reductive methylation of 2'-deoxyuridine-5'-monophosphate (dUMP) to 2'-deoxythymidine-5'-monophosphate (dTMP) while utilizing 5,10-methylenetetrahydrofolate (mTHF) as the methyl donor, and NADPH and FADH(2) as the reductant. The sequence is that of Flavin-dependent thymidylate synthase from Nitratidesulfovibrio vulgaris (strain ATCC 29579 / DSM 644 / CCUG 34227 / NCIMB 8303 / VKM B-1760 / Hildenborough) (Desulfovibrio vulgaris).